The chain runs to 586 residues: Penicillin-binding protein activator LpoA (586 aa).

The first 26 residues, 1-26 (MLSILMQGLRLKKCFLPILVMFFLAG), serve as a signal peptide directing secretion. Cys-27 carries N-palmitoyl cysteine lipidation. Cys-27 is lipidated: S-diacylglycerol cysteine.

The protein belongs to the LpoA family. In terms of assembly, interacts with PBP1a.

The protein resides in the cell outer membrane. Regulator of peptidoglycan synthesis that is essential for the function of penicillin-binding protein 1A (PBP1a). This Histophilus somni (strain 2336) (Haemophilus somnus) protein is Penicillin-binding protein activator LpoA.